A 74-amino-acid chain; its full sequence is DNA-directed RNA polymerase subunit omega (74 aa).

This sequence belongs to the RNA polymerase subunit omega family. As to quaternary structure, the RNAP catalytic core consists of 2 alpha, 1 beta, 1 beta' and 1 omega subunit. When a sigma factor is associated with the core the holoenzyme is formed, which can initiate transcription.

The catalysed reaction is RNA(n) + a ribonucleoside 5'-triphosphate = RNA(n+1) + diphosphate. Promotes RNA polymerase assembly. Latches the N- and C-terminal regions of the beta' subunit thereby facilitating its interaction with the beta and alpha subunits. The chain is DNA-directed RNA polymerase subunit omega from Helicobacter acinonychis (strain Sheeba).